Here is a 529-residue protein sequence, read N- to C-terminus: MSALNSFNMYKSALILGSLLATAGAQQIGTYTAETHPSLSWSTCKSGGSCTTNSGAITLDANWRWVHGVNTSTNCYTGNTWNTAICDTDASCAQDCALDGADYSGTYGITTSGNSLRLNFVTGSNVGSRTYLMADNTHYQIFDLLNQEFTFTVDVSNLPCGLNGALYFVTMDADGGVSKYPNNKAGAQYGVGYCDSQCPRDLKFIAGQANVEGWTPSTNNSNTGIGNHGSCCAELDIWEANSISEALTPHPCDTPGLTVCTADDCGGTYSSNRYAGTCDPDGCDFNPYRLGVTDFYGSGKTVDTTKPFTVVTQFVTDDGTSSGSLSEIRRYYVQNGVVIPQPSSKISGISGNVINSDFCAAELSAFGETASFTNHGGLKNMGSALEAGMVLVMSLWDDYSVNMLWLDSTYPANETGTPGAARGSCPTTSGNPKTVESQSGSSYVVFSDIKVGPFNSTFSGGTSTGGSTTTTASGTTSTKASTTSTSSTSTGTGVAAHWGQCGGQGWTGPTTCASGTTCTVVNPYYSQCL.

The signal sequence occupies residues 1–25 (MSALNSFNMYKSALILGSLLATAGA). A catalytic region spans residues 26-456 (QQIGTYTAET…SDIKVGPFNS (431 aa)). N-linked (GlcNAc...) asparagine glycosylation is found at asparagine 70 and asparagine 219. Glutamate 234 acts as the Nucleophile in catalysis. Glutamate 239 acts as the Proton donor in catalysis. N-linked (GlcNAc...) asparagine glycosylation is present at asparagine 413. Residues 413-438 (NETGTPGAARGSCPTTSGNPKTVESQ) form a disordered region. The span at 425–438 (CPTTSGNPKTVESQ) shows a compositional bias: polar residues. Asparagine 455 carries N-linked (GlcNAc...) asparagine glycosylation. Positions 457 to 493 (TFSGGTSTGGSTTTTASGTTSTKASTTSTSSTSTGTG) are thr-rich linker. Residues 460–491 (GGTSTGGSTTTTASGTTSTKASTTSTSSTSTG) are disordered. Residues 493–529 (GVAAHWGQCGGQGWTGPTTCASGTTCTVVNPYYSQCL) form the CBM1 domain. Intrachain disulfides connect cysteine 501–cysteine 518 and cysteine 512–cysteine 528.

It belongs to the glycosyl hydrolase 7 (cellulase C) family.

The protein localises to the secreted. It catalyses the reaction Hydrolysis of (1-&gt;4)-beta-D-glucosidic linkages in cellulose and cellotetraose, releasing cellobiose from the non-reducing ends of the chains.. Cellobiose inhibits xynA at high concentrations. The biological conversion of cellulose to glucose generally requires three types of hydrolytic enzymes: (1) Endoglucanases which cut internal beta-1,4-glucosidic bonds; (2) Exocellobiohydrolases that cut the disaccharide cellobiose from the non-reducing end of the cellulose polymer chain; (3) Beta-1,4-glucosidases which hydrolyze the cellobiose and other short cello-oligosaccharides to glucose. This chain is 1,4-beta-D-glucan cellobiohydrolase xynA (xynA), found in Talaromyces funiculosus (Fruitlet core rot fungus).